A 106-amino-acid polypeptide reads, in one-letter code: 3-phenylpropionate/cinnamic acid dioxygenase ferredoxin subunit (106 aa).

The region spanning 4 to 99 (IYACPVADVP…VHVEGGDIFI (96 aa)) is the Rieske domain. Residues Cys-42, His-44, Cys-62, and His-65 each coordinate [2Fe-2S] cluster.

This sequence belongs to the bacterial ring-hydroxylating dioxygenase ferredoxin component family. As to quaternary structure, this dioxygenase system consists of four proteins: the two subunits of the hydroxylase component (HcaE and HcaF), a ferredoxin (HcaC) and a ferredoxin reductase (HcaD). The cofactor is [2Fe-2S] cluster.

Its pathway is aromatic compound metabolism; 3-phenylpropanoate degradation. In terms of biological role, part of the multicomponent 3-phenylpropionate dioxygenase, that converts 3-phenylpropionic acid (PP) and cinnamic acid (CI) into 3-phenylpropionate-dihydrodiol (PP-dihydrodiol) and cinnamic acid-dihydrodiol (CI-dihydrodiol), respectively. This protein seems to be a 2Fe-2S ferredoxin. This chain is 3-phenylpropionate/cinnamic acid dioxygenase ferredoxin subunit, found in Escherichia coli O139:H28 (strain E24377A / ETEC).